Reading from the N-terminus, the 360-residue chain is Peptide chain release factor 1 (360 aa).

Q237 is modified (N5-methylglutamine).

Belongs to the prokaryotic/mitochondrial release factor family. Methylated by PrmC. Methylation increases the termination efficiency of RF1.

The protein resides in the cytoplasm. In terms of biological role, peptide chain release factor 1 directs the termination of translation in response to the peptide chain termination codons UAG and UAA. In Cellvibrio japonicus (strain Ueda107) (Pseudomonas fluorescens subsp. cellulosa), this protein is Peptide chain release factor 1.